The sequence spans 277 residues: MTQMNFTDKIKVAIIANGKYQSKRLTAKLFAILRNDDRFYLTKKNPDIVITIGGDGMLLSAFHMYEKCLDHVRFVGIHTGHLGFYTDYRDFEVDKLLENLHSDKGEKASYPILKVTATLADGRQLTSRALNEATIRRIEKTMVADVVINKVHFERFRGDGISVSTPTGSTAYNKSLGGAVLHPTIEALQLTEISSLNNRVFRTLGSSIIVPKKDKIEIVPKRLGSYVLSIDNKTYTHRNVAKIEYEIDRKKISFVSTPSHTSFWERVKDAFIGDFDS.

The active-site Proton acceptor is the Asp-55. NAD(+) is bound by residues 55 to 56 (DG), 131 to 132 (NE), Arg-157, Asp-159, and 170 to 175 (TAYNKS).

Belongs to the NAD kinase family. The cofactor is a divalent metal cation.

Its subcellular location is the cytoplasm. The catalysed reaction is NAD(+) + ATP = ADP + NADP(+) + H(+). Involved in the regulation of the intracellular balance of NAD and NADP, and is a key enzyme in the biosynthesis of NADP. Catalyzes specifically the phosphorylation on 2'-hydroxyl of the adenosine moiety of NAD to yield NADP. The polypeptide is NAD kinase (Streptococcus mutans serotype c (strain ATCC 700610 / UA159)).